The sequence spans 896 residues: Sodium/hydrogen exchanger 5 (896 aa).

Over 1–45 the chain is Cytoplasmic; that stretch reads MLRAALSLLALPLAGAAEEPTQKPESPGEPPPGLELFRWQWHEVE. A helical membrane pass occupies residues 46-66; sequence APYLVALWILVASLAKIVFHL. Residues 67–73 are Extracellular-facing; sequence SRKVTSL. Residues 74–94 traverse the membrane as a helical segment; that stretch reads VPESCLLILLGLVLGGIVLAV. Topologically, residues 95–103 are cytoplasmic; sequence AKKAEYQLE. The chain crosses the membrane as a helical span at residues 104-124; that stretch reads PGTFFLFLLPPIVLDSGYFMP. The Extracellular portion of the chain corresponds to 125–134; the sequence is SRLFFDNLGA. Residues 135-155 form a helical membrane-spanning segment; the sequence is ILTYAVVGTLWNAFTTGAALW. Topologically, residues 156–173 are cytoplasmic; the sequence is GLQQAGLVAPRVQAGLLD. A helical transmembrane segment spans residues 174 to 194; the sequence is FLLFGSLISAVDPVAVLAVFE. Topologically, residues 195–200 are extracellular; it reads EVHVNE. An N-linked (GlcNAc...) asparagine glycan is attached at Asn199. The chain crosses the membrane as a helical span at residues 201–221; that stretch reads TLFIIVFGESLLNDAVTVVLY. Topologically, residues 222–246 are cytoplasmic; that stretch reads KVCNSFVEMGSANVQATDYLKGVAS. The helical transmembrane segment at 247 to 267 threads the bilayer; that stretch reads LFVVSLGGAAVGLVFAFLLAL. Residues 268–276 lie on the Extracellular side of the membrane; the sequence is TTRFTKRVR. A helical membrane pass occupies residues 277–297; that stretch reads IIEPLLVFLLAYAAYLTAEMA. Over 298 to 331 the chain is Cytoplasmic; the sequence is SLSAILAVTMCGLGCKKYVEANISHKSRTTVKYT. The chain crosses the membrane as a helical span at residues 332-352; that stretch reads MKTLASCAETVIFMLLGISAV. Residues 353-360 are Extracellular-facing; it reads DSSKWAWD. A helical membrane pass occupies residues 361-381; it reads SGLVLGTLIFILFFRALGVVL. At 382 to 398 the chain is on the cytoplasmic side; sequence QTWVLNQFRLVPLDKID. A helical transmembrane segment spans residues 399-419; sequence QVVMSYGGLRGAVAFALVILL. Residues 420 to 428 lie on the Extracellular side of the membrane; sequence DRTKVPAKD. A helical transmembrane segment spans residues 429–449; it reads YFVATTIVVVFFTVIVQGLTI. At 450-896 the chain is on the cytoplasmic side; sequence KPLVKWLKVK…CIQFNRGSRL (447 aa). The interval 576 to 721 is required for interaction with ARRB2; the sequence is GSGACLDLQV…SETEKEDDEG (146 aa). Disordered stretches follow at residues 658–686, 701–720, and 818–864; these read TKSK…GKHR, ESEE…EDDE, and HPRG…QQQE. A compositionally biased stretch (basic residues) spans 660–672; that stretch reads SKPRPRKTGRRKK. The segment covering 854-864 has biased composition (polar residues); sequence ESSADLPQQQE.

It belongs to the monovalent cation:proton antiporter 1 (CPA1) transporter (TC 2.A.36) family. In terms of assembly, interacts with CHP1 and CHP2. Interacts with ARRB2; facilitates the endocytosis of SLC9A5 from the plasma membrane. Interacts with RACK1; this interaction positively regulates SLC9A5 activity and promotes SLC9A5 localization to focal adhesions. Interacts with SCAMP2; this interaction regulates SLC9A5 cell-surface targeting and SLC9A5 activity. Phosphorylated by PRKAA2; promotes its accumulation at the cell surface. Phosphorylated by CSNK2A1 in a manner favoring its beta-arrestin binding and endocytosis. As to expression, mainly expressed in brain. Expressed in neurons of the central and peripheral nervous system. Expressed also in testis, spleen, and skeletal muscle.

It localises to the cell membrane. It is found in the recycling endosome membrane. The protein resides in the cell projection. Its subcellular location is the dendritic spine membrane. The protein localises to the synaptic cell membrane. It localises to the cell junction. It is found in the focal adhesion. It catalyses the reaction Na(+)(in) + H(+)(out) = Na(+)(out) + H(+)(in). With respect to regulation, ATP-depletion almost completely abolishes SLC9A5 activity. Inhibited by amiloride compounds. Functionally, plasma membrane Na(+)/H(+) antiporter. Mediates the electroneutral exchange of intracellular H(+) ions for extracellular Na(+) in 1:1 stoichiometry, thus regulating intracellular pH homeostasis, in particular in neural tissues. Acts as a negative regulator of dendritic spine growth. Plays a role in postsynaptic remodeling and signaling. Can also contribute to organellar pH regulation, with consequences for receptor tyrosine kinase trafficking. The sequence is that of Sodium/hydrogen exchanger 5 from Homo sapiens (Human).